The following is a 328-amino-acid chain: DNA-directed RNA polymerase subunit alpha (328 aa).

The segment at 1–230 is alpha N-terminal domain (alpha-NTD); the sequence is MNKIKITPSV…QSQMEIFTND (230 aa). An alpha C-terminal domain (alpha-CTD) region spans residues 243–328; it reads NSEIFYQPLD…ILKKIEQNKS (86 aa).

This sequence belongs to the RNA polymerase alpha chain family. In terms of assembly, homodimer. The RNAP catalytic core consists of 2 alpha, 1 beta, 1 beta' and 1 omega subunit. When a sigma factor is associated with the core the holoenzyme is formed, which can initiate transcription.

The enzyme catalyses RNA(n) + a ribonucleoside 5'-triphosphate = RNA(n+1) + diphosphate. Its function is as follows. DNA-dependent RNA polymerase catalyzes the transcription of DNA into RNA using the four ribonucleoside triphosphates as substrates. The polypeptide is DNA-directed RNA polymerase subunit alpha (Nitratiruptor sp. (strain SB155-2)).